A 151-amino-acid polypeptide reads, in one-letter code: uncharacterized protein (151 aa).

The Nudix hydrolase domain maps to 6-143; it reads MKTLSAGIIF…QWQYVMGPSL (138 aa).

This is an uncharacterized protein from Escherichia coli (Bacteriophage T4).